A 1282-amino-acid polypeptide reads, in one-letter code: Indigoidine synthase (1282 aa).

The tract at residues 24 to 379 (AQRVAEHPEA…GGIQLARGYL (356 aa)) is adenylation. Positions 937–1012 (APRTETEKEI…KLARRLEREV (76 aa)) constitute a Carrier domain. An O-(pantetheine 4'-phosphoryl)serine modification is found at Ser-972. Residues 1030–1138 (RPVICWPGLG…APGSPKVRAE (109 aa)) are thioesterase.

The protein belongs to the ATP-dependent AMP-binding enzyme family. The cofactor is pantetheine 4'-phosphate.

The catalysed reaction is 2 FMN + 2 L-glutamine + 2 ATP + O2 = indigoidine + 2 FMNH2 + 2 AMP + 2 diphosphate + 2 H2O. It catalyses the reaction FMN + L-glutamine + ATP = 3-amino-1,5-dihydropyridine-2,6-dione + FMNH2 + AMP + diphosphate. The enzyme catalyses 2 3-amino-1,5-dihydropyridine-2,6-dione + O2 = indigoidine + 2 H2O. Its pathway is pigment biosynthesis. In terms of biological role, nonribosomal peptide synthetase involved in the biosynthesis of the blue pigment indigoidine. Catalyzes the synthesis of the blue pigment using L-Gln as a substrate. Two glutamine molecules are cyclized and oxidized to form indigoidine. The chain is Indigoidine synthase from Streptomyces lavendulae.